Reading from the N-terminus, the 396-residue chain is Chorismate synthase (396 aa).

The NADP(+) site is built by Arg40 and Arg46. FMN contacts are provided by residues 134–136 (RSS), 257–258 (QA), Gly302, 317–321 (KPIPS), and Arg343.

Belongs to the chorismate synthase family. As to quaternary structure, homotetramer. The cofactor is FMNH2.

The enzyme catalyses 5-O-(1-carboxyvinyl)-3-phosphoshikimate = chorismate + phosphate. Its pathway is metabolic intermediate biosynthesis; chorismate biosynthesis; chorismate from D-erythrose 4-phosphate and phosphoenolpyruvate: step 7/7. Catalyzes the anti-1,4-elimination of the C-3 phosphate and the C-6 proR hydrogen from 5-enolpyruvylshikimate-3-phosphate (EPSP) to yield chorismate, which is the branch point compound that serves as the starting substrate for the three terminal pathways of aromatic amino acid biosynthesis. This reaction introduces a second double bond into the aromatic ring system. The polypeptide is Chorismate synthase (Bifidobacterium animalis subsp. lactis (strain AD011)).